A 566-amino-acid polypeptide reads, in one-letter code: MAAFTVIIIGGSISGLTLANVLEKYGIKYILLEKRPSIGPQLGATVVVHPSGLHLLSQLGLRERVEELATPVELQKAIGPDGTFVLNIAATNQCDRTIADALSTGYMPMFIARQDLIKVLYDNLQDKFRVHASLGLRELEWAGDKVKVTTTDGTSVVGDIVVGADGANSRTRAEIWKIADVEDPSYGSQQLAKSIACTYRCVFGMVDDGDSSLARTAYLAFQYNRAYTYLPTDSGRAYFLAFFKNPAKTVNDAIPRYSDQDEDADVAAHANDIIVPGLTFGDLYKRRTRCTLVPLQEYLLDKCFYKRVVLIGDAVHKLNPITGRGANLAIEGAALLGDLIKHALEKSLQPTDEMLQTAFFTYQQCTKSRAPSQIDDAHRVQSLAALENPLLKFMSLKLLKRATADKLALGVAVDFSTGHSMRYLPQLPQRGMVPLNKDVVANPEHRPASSTVLWIILMLGMASLGAVWQKHQRAEEDQPIHGYTLLTLSTFYNLMILFASAVHGSLGRRAVNLSFSDDSGMVPFYAVGHAPDKYRPTTPSRRVGLLVPGPSYLGSGGHFNGLLEVA.

Positions 1 to 19 are cleaved as a signal peptide; that stretch reads MAAFTVIIIGGSISGLTLA. FAD contacts are provided by Glu33, Val47, Arg113, Asp313, and Ala326. Transmembrane regions (helical) follow at residues 448–468 and 482–502; these read ASSTVLWIILMLGMASLGAVW and GYTLLTLSTFYNLMILFASAV.

Belongs to the paxM FAD-dependent monooxygenase family. FAD serves as cofactor.

It is found in the membrane. It catalyses the reaction [(1'E)-3'-hydroxy-3',7'-dimethylocta-1',6'-dien-1'-yl]-quinolinone B + NADPH + O2 + H(+) = [(1'E)-5'-(3',3'-dimethyloxiran-2'-yl)-3'-hydroxy-3'-methylpent-1'-en-1'-yl]-quinolinone B + NADP(+) + H2O. The protein operates within secondary metabolite biosynthesis. It participates in alkaloid biosynthesis. It functions in the pathway mycotoxin biosynthesis. Functionally, FAD-dependent monooxygenase; part of the gene cluster that mediates the biosynthesis of the aspoquinolone mycotoxins. Within the pathway, the FAD-dependent monooxygenase asqG catalyzes the epoxidation of the terminal C7'-C8' olefin to produce the intermediate [(1'E)-5'-(3',3'-dimethyloxiran-2'-yl)-3'-hydroxy-3'-methylpent-1'-en-1'-yl]-quinolinone B. The first step of the pathway is catalyzed by the nonribosomal peptide synthetase asqK that condenses anthranilic acid and O-methyl-L-tyrosine to produce 4'-methoxycyclopeptin. 4'-methoxycyclopeptin is then converted to 4'-methoxydehydrocyclopeptin by the ketoglutarate-dependent dioxygenase asqJ. AsqJ also converts its first product 4'-methoxydehydrocyclopeptin to 4'-methoxycyclopenin. The following conversion of 4'-methoxycyclopenin into 4'-methoxyviridicatin is catalyzed by the cyclopenase asqI. 4'-methoxyviridicatin is the precursor of quinolone natural products, and is further converted to quinolinone B. The prenyltransferase asqH1 then catalyzes the canonical Friedel-Crafts alkylation of quinolinone B with dimethylallyl cation to yield dimethylallyl quinolone, which is subjected to FAD-dependent dehydrogenation by the FAD-linked oxidoreductase asqF to yield conjugated aryl diene. The delta(3') double bond then serves as the site of the second alkylation with DMAPP catalyzed by the prenyltransferase asqH2 to yield a carbenium ion intermediate, which can be attacked by H(2)O to yield a styrenyl quinolone containing a C3'-hydroxyprenyl chain. The FAD-dependent monooxygenase asqG performs epoxidation of the terminal C7'-C8' olefin. Finally, after dehydratation of the epoxide at C3 by asqC, the quinolone epoxide rearrangement protein asqO catalyzes an enzymatic 3-exo-tet cyclization to yield the cyclopropyl-THF ring system in aspoquinolone. This chain is FAD-dependent monooxygenase asqG, found in Emericella nidulans (strain FGSC A4 / ATCC 38163 / CBS 112.46 / NRRL 194 / M139) (Aspergillus nidulans).